Consider the following 123-residue polypeptide: Small ribosomal subunit protein uS12 (123 aa).

The interval 1-30 (MPTIQQLIRKPRQPKIKRSKSQHMEGCPQK) is disordered. Positions 9 to 21 (RKPRQPKIKRSKS) are enriched in basic residues. D89 carries the 3-methylthioaspartic acid modification. The disordered stretch occupies residues 104–123 (TQGVKDRRQRRSKYGAKRPK). Positions 110 to 123 (RRQRRSKYGAKRPK) are enriched in basic residues.

It belongs to the universal ribosomal protein uS12 family. In terms of assembly, part of the 30S ribosomal subunit. Contacts proteins S8 and S17. May interact with IF1 in the 30S initiation complex.

Functionally, with S4 and S5 plays an important role in translational accuracy. In terms of biological role, interacts with and stabilizes bases of the 16S rRNA that are involved in tRNA selection in the A site and with the mRNA backbone. Located at the interface of the 30S and 50S subunits, it traverses the body of the 30S subunit contacting proteins on the other side and probably holding the rRNA structure together. The combined cluster of proteins S8, S12 and S17 appears to hold together the shoulder and platform of the 30S subunit. The chain is Small ribosomal subunit protein uS12 from Jannaschia sp. (strain CCS1).